Here is a 198-residue protein sequence, read N- to C-terminus: Recombination protein RecR (198 aa).

The segment at 57-72 (CSVCGHITDQDPCYIC) adopts a C4-type zinc-finger fold. The 96-residue stretch at 80 to 175 (SVICVVQDPK…KLSRIAHGLP (96 aa)) folds into the Toprim domain.

The protein belongs to the RecR family.

May play a role in DNA repair. It seems to be involved in an RecBC-independent recombinational process of DNA repair. It may act with RecF and RecO. This chain is Recombination protein RecR, found in Bacillus licheniformis (strain ATCC 14580 / DSM 13 / JCM 2505 / CCUG 7422 / NBRC 12200 / NCIMB 9375 / NCTC 10341 / NRRL NRS-1264 / Gibson 46).